The sequence spans 395 residues: Chorismate synthase (395 aa).

Positions 40 and 46 each coordinate NADP(+). FMN is bound by residues 135-137 (RAS) and 256-257 (QA). Basic and acidic residues predominate over residues 272 to 283 (RRGSQAHDEMRP). Positions 272–296 (RRGSQAHDEMRPGPDGILRSTNRAG) are disordered. Residues Gly-300, 315–319 (KPIST), and Arg-341 each bind FMN.

The protein belongs to the chorismate synthase family. In terms of assembly, homotetramer. FMNH2 serves as cofactor.

The enzyme catalyses 5-O-(1-carboxyvinyl)-3-phosphoshikimate = chorismate + phosphate. The protein operates within metabolic intermediate biosynthesis; chorismate biosynthesis; chorismate from D-erythrose 4-phosphate and phosphoenolpyruvate: step 7/7. In terms of biological role, catalyzes the anti-1,4-elimination of the C-3 phosphate and the C-6 proR hydrogen from 5-enolpyruvylshikimate-3-phosphate (EPSP) to yield chorismate, which is the branch point compound that serves as the starting substrate for the three terminal pathways of aromatic amino acid biosynthesis. This reaction introduces a second double bond into the aromatic ring system. This chain is Chorismate synthase, found in Rhodococcus opacus (strain B4).